The following is a 430-amino-acid chain: MKITIAQAPQYIEQEVTIGAWLSNKRSSGKIAFLQLRDGTGFMQGIVVKSDVSEDVFSTSKNITQESSLYVTGKIVEDTRSDFGYEMQVSNVEVIHEANDYPITPKEHGTEFLMDHRHLWLRSKKQHAVMKIRNEIIRSTYEYFNKEGFVKVDPPILTGSSAEGTTELFHTKYFDEEAYLSQSGQLYMEAAAMALGKVFSFGPTFRAEKSKTRRHLIEFWMIEPEMAFVEHEESLQIQENYVSHIVQSVLTNCKLELSVLDRDLSKLEKIKAPFPRISYDEAIDMLKEKGFDDIEWGEDFGAPHETAIAESYDMPVFITNYPKDIKAFYMKPHPDRSDVVLCADLIAPEGYGEIIGGSQRIDDLELMEQRYEEHGLTGPAYQWYLELRKYGSVPHSGFGLGLERTVAWLSGVEHVRETIPFPRLLNRLYP.

It belongs to the class-II aminoacyl-tRNA synthetase family. In terms of assembly, homodimer.

It localises to the cytoplasm. It carries out the reaction tRNA(Asn) + L-asparagine + ATP = L-asparaginyl-tRNA(Asn) + AMP + diphosphate + H(+). The sequence is that of Asparagine--tRNA ligase from Oceanobacillus iheyensis (strain DSM 14371 / CIP 107618 / JCM 11309 / KCTC 3954 / HTE831).